A 164-amino-acid chain; its full sequence is Proline-rich protein 2 (164 aa).

Positions M1–P21 are cleaved as a signal peptide.

As to expression, component of the acid-soluble organic matrix of calcified layers of the shell (at protein level).

The protein resides in the secreted. This Lottia gigantea (Giant owl limpet) protein is Proline-rich protein 2.